A 396-amino-acid polypeptide reads, in one-letter code: 1-deoxy-D-xylulose 5-phosphate reductoisomerase (396 aa).

The NADPH site is built by T15, G16, S17, I18, G41, and N130. Residue K131 participates in 1-deoxy-D-xylulose 5-phosphate binding. Residue E132 coordinates NADPH. D155 is a Mn(2+) binding site. 1-deoxy-D-xylulose 5-phosphate-binding residues include S156, E157, S181, and H204. Residue E157 participates in Mn(2+) binding. G210 is an NADPH binding site. Residues S217, N222, K223, and E226 each coordinate 1-deoxy-D-xylulose 5-phosphate. E226 lines the Mn(2+) pocket.

This sequence belongs to the DXR family. It depends on Mg(2+) as a cofactor. Mn(2+) is required as a cofactor.

The enzyme catalyses 2-C-methyl-D-erythritol 4-phosphate + NADP(+) = 1-deoxy-D-xylulose 5-phosphate + NADPH + H(+). Its pathway is isoprenoid biosynthesis; isopentenyl diphosphate biosynthesis via DXP pathway; isopentenyl diphosphate from 1-deoxy-D-xylulose 5-phosphate: step 1/6. Catalyzes the NADPH-dependent rearrangement and reduction of 1-deoxy-D-xylulose-5-phosphate (DXP) to 2-C-methyl-D-erythritol 4-phosphate (MEP). The polypeptide is 1-deoxy-D-xylulose 5-phosphate reductoisomerase (Bifidobacterium longum (strain NCC 2705)).